Consider the following 139-residue polypeptide: Peptide methionine sulfoxide reductase MsrB (139 aa).

The 123-residue stretch at 9–131 folds into the MsrB domain; it reads TPSDNTEMTE…NSASLSFIDD (123 aa). Zn(2+)-binding residues include Cys48, Cys51, Cys97, and Cys100. Residue Cys120 is the Nucleophile of the active site.

The protein belongs to the MsrB Met sulfoxide reductase family. Requires Zn(2+) as cofactor.

It carries out the reaction L-methionyl-[protein] + [thioredoxin]-disulfide + H2O = L-methionyl-(R)-S-oxide-[protein] + [thioredoxin]-dithiol. The protein is Peptide methionine sulfoxide reductase MsrB of Pectobacterium atrosepticum (strain SCRI 1043 / ATCC BAA-672) (Erwinia carotovora subsp. atroseptica).